A 615-amino-acid polypeptide reads, in one-letter code: MPIQVLPPQLANQIAAGEVVERPASVVKELVENSLDAGATRIDIDIERGGAKLIRIRDNGCGIKKDELALALARHATSKIASLDDLEAIISLGFRGEALASISSVSRLTLTSRTVDQQEAWQAYAEGRDMDVTVKPAAHPVGTTLEVLDLFYNTPARRKFLRTEKTEFNHIDEIIRRIALARFDVTINLSHNGKIVRQYRAVPEGGQKERRLGAICGTAFLEHALAIEWQHGDLTLRGWVADPNHTTPTLAEIQYCYVNGRMMRDRLINHAIRQACENKLGADQQPAFVLYLEIDPHQVDVNVHPAKHEVRFHQSRLVHDFIYQGVLSVLQQQLETPLPLDDEPQPAPRTIPENRVAAGRNHFAEPAVREPVAPRYSPAPASGGRPAASWPNAQPGYQKQQGEVYRQLLQTPAPMQKPKAPEPQEPALAANSQSFGRVLTIVHSDCALLERDGNISLLALPVAERWLRQAQLTPGETPVCAQPLLIPLRLKVSGEEKSALEKAQSALAELGIDFQSDAQYVTIRAVPLPLRQQNLQILIPELIGYLAKQSVFEPGNIAQWIARNLMSEHAQWSMAQAITLLADVERLCPQLVKTPPGGLLQSVDLHPAIKALKDE.

Residues 362–397 (HFAEPAVREPVAPRYSPAPASGGRPAASWPNAQPGY) form a disordered region. The span at 378–391 (PAPASGGRPAASWP) shows a compositional bias: low complexity.

It belongs to the DNA mismatch repair MutL/HexB family.

This protein is involved in the repair of mismatches in DNA. It is required for dam-dependent methyl-directed DNA mismatch repair. May act as a 'molecular matchmaker', a protein that promotes the formation of a stable complex between two or more DNA-binding proteins in an ATP-dependent manner without itself being part of a final effector complex. The protein is DNA mismatch repair protein MutL of Escherichia fergusonii (strain ATCC 35469 / DSM 13698 / CCUG 18766 / IAM 14443 / JCM 21226 / LMG 7866 / NBRC 102419 / NCTC 12128 / CDC 0568-73).